The chain runs to 362 residues: Phosphoserine aminotransferase (362 aa).

Arg-43 lines the L-glutamate pocket. Pyridoxal 5'-phosphate-binding positions include 77–78 (AS), Trp-103, Thr-153, Asp-173, and Gln-196. N6-(pyridoxal phosphate)lysine is present on Lys-197. 238 to 239 (NT) contacts pyridoxal 5'-phosphate.

The protein belongs to the class-V pyridoxal-phosphate-dependent aminotransferase family. SerC subfamily. As to quaternary structure, homodimer. Pyridoxal 5'-phosphate serves as cofactor.

Its subcellular location is the cytoplasm. It catalyses the reaction O-phospho-L-serine + 2-oxoglutarate = 3-phosphooxypyruvate + L-glutamate. The catalysed reaction is 4-(phosphooxy)-L-threonine + 2-oxoglutarate = (R)-3-hydroxy-2-oxo-4-phosphooxybutanoate + L-glutamate. It functions in the pathway amino-acid biosynthesis; L-serine biosynthesis; L-serine from 3-phospho-D-glycerate: step 2/3. In terms of biological role, catalyzes the reversible conversion of 3-phosphohydroxypyruvate to phosphoserine and of 3-hydroxy-2-oxo-4-phosphonooxybutanoate to phosphohydroxythreonine. The chain is Phosphoserine aminotransferase from Lysinibacillus sphaericus (strain C3-41).